The following is a 418-amino-acid chain: MRPQATLTVLPVERPLVGRVSPPGSKSITNRALLLAGLAKGTSRLTGALKSDDTRVMSEALRLMGVQVDEPDDSTFVVTSSGHWQAPQQALFLGNAGTATRFLTAALANFEGDFVVDGDEYMRKRPIGPLVDALQRMGVEVSAPSGCPPVAIKGKGGLEAGRIEIDGNLSSQYVSALLMAGACGKGPVEVALTGSEIGARGYLDLTLAAMRAFGAEVQAIGDAAWKVSATGYRATDFHIEPDASAATYLWAAQALTEGAIDLGVASNAFTQPDALASQIIASFPNMPAVIDGSQMQDAIPTLAVLAAFNRQPVRFVGIANLRVKECDRISALSNGLCAIAPGLAVEEGDDLIVTANPTLAGTTVDALIDTHSDHRIAMCFALAGLKIAGIRILDPDCVAKTYPGYWDALASLGVSVQR.

Residues lysine 26, serine 27, and arginine 31 each coordinate 3-phosphoshikimate. A phosphoenolpyruvate-binding site is contributed by lysine 26. 2 residues coordinate phosphoenolpyruvate: glycine 97 and arginine 125. 6 residues coordinate 3-phosphoshikimate: serine 170, serine 171, glutamine 172, aspartate 297, asparagine 320, and lysine 324. Glutamine 172 is a binding site for phosphoenolpyruvate. Aspartate 297 acts as the Proton acceptor in catalysis. Phosphoenolpyruvate is bound by residues arginine 328, arginine 375, and lysine 400.

Belongs to the EPSP synthase family. Monomer.

It is found in the cytoplasm. The catalysed reaction is 3-phosphoshikimate + phosphoenolpyruvate = 5-O-(1-carboxyvinyl)-3-phosphoshikimate + phosphate. Its pathway is metabolic intermediate biosynthesis; chorismate biosynthesis; chorismate from D-erythrose 4-phosphate and phosphoenolpyruvate: step 6/7. Catalyzes the transfer of the enolpyruvyl moiety of phosphoenolpyruvate (PEP) to the 5-hydroxyl of shikimate-3-phosphate (S3P) to produce enolpyruvyl shikimate-3-phosphate and inorganic phosphate. The polypeptide is 3-phosphoshikimate 1-carboxyvinyltransferase (Pseudomonas syringae pv. syringae (strain B728a)).